We begin with the raw amino-acid sequence, 43 residues long: Protein PsbN (43 aa).

The helical transmembrane segment at 5 to 27 (TLIAISISGLLVSFTGYALYTAF) threads the bilayer.

The protein belongs to the PsbN family.

The protein resides in the plastid. It localises to the chloroplast thylakoid membrane. In terms of biological role, may play a role in photosystem I and II biogenesis. This chain is Protein PsbN, found in Phaseolus vulgaris (Kidney bean).